An 846-amino-acid chain; its full sequence is MCFLRRPGAPASWIWWRMLRQVLRRGLQSFCHRLGLCVSRHPVFFLTVPAVLTITFGLSALNRFQPEGDLERLVAPSHSLAKIERSLASSLFPLDQSKSQLYSDLHTPGRYGRVILLSPTGDNILLQAEGILQTHRAVLEMKDGRNSFIGHQLGGVVEVPNSKDQRVKSARAIQITYYLQTYGSATQDLIGEKWENEFCKLIRKLQEEHQELQLYSLASFSLWRDFHKTSILARSKVLVSLVLILTTATLSSSMKDCLRSKPFLGLLGVLTVCISIITAAGIFFITDGKYNSTLLGIPFFAMGHGTKGVFELLSGWRRTKENLPFKDRIADAYSDVMVTYTMTSSLYFITFGMGASPFTNIEAVKVFCQNMCVSILLNYFYIFSFFGSCLVFAGQLEQNRYHSIFCCKIPSAEYLDRKPVWFQTVMSDGHQQTSHHETNPYQHHFIQHFLREHYNEWITNIYVKPFVVILYLIYASFSFMGCLQISDGANIINLLASDSPSVSYAMVQQKYFSNYSPVIGFYVYEPLEYWNSSVQDDLRRLCSGFTAVSWVEQYYQFLKVSNVSANNKSDFISVLQSSFLKKPEFQHFRNDIIFSKAGDESNIIASRLYLVARTSRDKQKEITEVLEKLRPLSLSKSIRFIVFNPSFVFMDHYSLSVTVPVLIAGFGVLLVLILTFFLVIHPLGNFWLILSVTSIELGVLGLMTLWNVDMDCISILCLIYTLNFAIDHCAPLLFTFVLATEHTRTQCIKSSLQDHGTAILQNVTSFLIGLVPLLFVPSNLTFTLFKCLLLTGGCTLLHCFVILPVFLTFFPPSKKHHKKKKRAKRKEREEIECIEIQENPDHVTTV.

10 helical membrane-spanning segments follow: residues 41–61 (HPVF…LSAL), 230–250 (SILA…TATL), 265–285 (GLLG…IFFI), 293–313 (TLLG…FELL), 336–356 (VMVT…MGAS), 373–393 (VSIL…LVFA), 465–485 (PFVV…CLQI), 660–680 (PVLI…FLVI), 686–706 (FWLI…MTLW), and 718–738 (LIYT…TFVL). The SSD domain maps to 233-392 (ARSKVLVSLV…FSFFGSCLVF (160 aa)). Asparagine 762 carries an N-linked (GlcNAc...) asparagine glycan. 2 helical membrane passes run 765-785 (SFLI…FTLF) and 787-807 (CLLL…PVFL).

It belongs to the patched family.

The protein localises to the membrane. Its function is as follows. Could act as a repressor of canonical hedgehog signaling by antagonizing the effects of SMO, as suggested by down-regulation of hedgehog target genes, including GLI1, PTCH1, and PTCH2 in PTCHD4-expressing cells. The chain is Patched domain-containing protein 4 (PTCHD4) from Homo sapiens (Human).